We begin with the raw amino-acid sequence, 729 residues long: Fatty acid oxidation complex subunit alpha (729 aa).

Residues 1 to 189 (MLYQGESLYL…KVGLVQAVVA (189 aa)) are enoyl-CoA hydratase/isomerase. Asp-296 is a binding site for substrate. Positions 311–729 (PVPQQAAVLG…HADVSHGQPA (419 aa)) are 3-hydroxyacyl-CoA dehydrogenase. Residues Met-324, Asp-343, 400–402 (VVE), Lys-407, and Ser-429 each bind NAD(+). Residue His-450 is the For 3-hydroxyacyl-CoA dehydrogenase activity of the active site. Asn-453 contributes to the NAD(+) binding site. Residues Asn-500 and Tyr-660 each contribute to the substrate site.

The protein in the N-terminal section; belongs to the enoyl-CoA hydratase/isomerase family. It in the C-terminal section; belongs to the 3-hydroxyacyl-CoA dehydrogenase family. As to quaternary structure, heterotetramer of two alpha chains (FadB) and two beta chains (FadA).

It carries out the reaction a (3S)-3-hydroxyacyl-CoA + NAD(+) = a 3-oxoacyl-CoA + NADH + H(+). The catalysed reaction is a (3S)-3-hydroxyacyl-CoA = a (2E)-enoyl-CoA + H2O. It catalyses the reaction a 4-saturated-(3S)-3-hydroxyacyl-CoA = a (3E)-enoyl-CoA + H2O. The enzyme catalyses (3S)-3-hydroxybutanoyl-CoA = (3R)-3-hydroxybutanoyl-CoA. It carries out the reaction a (3Z)-enoyl-CoA = a 4-saturated (2E)-enoyl-CoA. The catalysed reaction is a (3E)-enoyl-CoA = a 4-saturated (2E)-enoyl-CoA. It participates in lipid metabolism; fatty acid beta-oxidation. In terms of biological role, involved in the aerobic and anaerobic degradation of long-chain fatty acids via beta-oxidation cycle. Catalyzes the formation of 3-oxoacyl-CoA from enoyl-CoA via L-3-hydroxyacyl-CoA. It can also use D-3-hydroxyacyl-CoA and cis-3-enoyl-CoA as substrate. The chain is Fatty acid oxidation complex subunit alpha from Pectobacterium atrosepticum (strain SCRI 1043 / ATCC BAA-672) (Erwinia carotovora subsp. atroseptica).